A 215-amino-acid chain; its full sequence is Cytochrome b6 (215 aa).

The chain crosses the membrane as a helical span at residues 32–52 (IFYCLGGITLTCFLVQVATGF). Cys35 lines the heme c pocket. The heme b site is built by His86 and His100. 3 helical membrane-spanning segments follow: residues 90–110 (ASMM…TGGF), 116–136 (LTWV…VTGY), and 186–206 (LHTF…FLMI). Heme b contacts are provided by His187 and His202.

The protein belongs to the cytochrome b family. PetB subfamily. In terms of assembly, the 4 large subunits of the cytochrome b6-f complex are cytochrome b6, subunit IV (17 kDa polypeptide, PetD), cytochrome f and the Rieske protein, while the 4 small subunits are PetG, PetL, PetM and PetN. The complex functions as a dimer. The cofactor is heme b. Requires heme c as cofactor.

The protein resides in the plastid. Its subcellular location is the chloroplast thylakoid membrane. In terms of biological role, component of the cytochrome b6-f complex, which mediates electron transfer between photosystem II (PSII) and photosystem I (PSI), cyclic electron flow around PSI, and state transitions. This is Cytochrome b6 from Pelargonium hortorum (Common geranium).